Here is a 541-residue protein sequence, read N- to C-terminus: 2-hydroxyacylsphingosine 1-beta-galactosyltransferase (541 aa).

The first 20 residues, 1-20 (MKSYTPYFMLLWSAVGIARA), serve as a signal peptide directing secretion. N-linked (GlcNAc...) asparagine glycans are attached at residues asparagine 78, asparagine 333, and asparagine 442. A helical membrane pass occupies residues 472–492 (YFLLDIAFVLLLGAVLLYFIL). The interval 518–541 (HYQNGIRNGKYKGNGRVKHEKKVR) is disordered. Residues 526 to 541 (GKYKGNGRVKHEKKVR) are compositionally biased toward basic residues.

The protein belongs to the UDP-glycosyltransferase family.

It is found in the membrane. The protein resides in the endoplasmic reticulum. It carries out the reaction an N-acylsphing-4-enine + UDP-alpha-D-galactose = a beta-D-galactosyl-(1&lt;-&gt;1')-N-acylsphing-4-enine + UDP + H(+). It catalyses the reaction N-(2-hydroxy-hexanoyl)-sphing-4-enine + UDP-alpha-D-galactose = N-(2-hydroxy-hexanoyl)-beta-D-galactosyl-sphing-4-enine + UDP + H(+). The catalysed reaction is N-(2-hydroxy-hexanoyl)-sphinganine + UDP-alpha-D-galactose = N-(2-hydroxyhexanoyl)-beta-D-galactosylsphinganine + UDP + H(+). The enzyme catalyses an N-acyl-sphingoid base + UDP-alpha-D-galactose = a D-galactosylceramide + UDP + H(+). The protein operates within sphingolipid metabolism; galactosylceramide biosynthesis. Functionally, catalyzes the transfer of galactose to ceramide, a key enzymatic step in the biosynthesis of galactocerebrosides, which are abundant sphingolipids of the myelin membrane of the central nervous system and peripheral nervous system. Galactosylates both hydroxy- and non-hydroxy fatty acid-containing ceramides and diglycerides. The protein is 2-hydroxyacylsphingosine 1-beta-galactosyltransferase of Mus musculus (Mouse).